We begin with the raw amino-acid sequence, 285 residues long: MDVLTLPAYGKINLTLKVLGRRSDGYHNLSTIFQSIALADRLTFSRCREGIRLETSGLPVPQGPENLAYRAAARLQSRYGFPGVRITLKKQIPLAAGLAGGSADAAATLIGVNALFNLGLTPGQLAREGAALGSDVPFCVIGGTALGRGRGEELSLLPPLPTLWLVLVKPSFGVSTAAVYRGWDASPGQTPMEAPDEERALAAIRRGDRAGIMASLGNDLEAVTCRLYPEVMAIKMRLLAEGAERAVMCGSGPAVFGVAADGETARRIASRLQETYPETIVTRTL.

Lys11 is an active-site residue. Residue 93–103 participates in ATP binding; it reads PLAAGLAGGSA. Asp135 is an active-site residue.

Belongs to the GHMP kinase family. IspE subfamily.

The enzyme catalyses 4-CDP-2-C-methyl-D-erythritol + ATP = 4-CDP-2-C-methyl-D-erythritol 2-phosphate + ADP + H(+). The protein operates within isoprenoid biosynthesis; isopentenyl diphosphate biosynthesis via DXP pathway; isopentenyl diphosphate from 1-deoxy-D-xylulose 5-phosphate: step 3/6. Functionally, catalyzes the phosphorylation of the position 2 hydroxy group of 4-diphosphocytidyl-2C-methyl-D-erythritol. The chain is 4-diphosphocytidyl-2-C-methyl-D-erythritol kinase from Moorella thermoacetica (strain ATCC 39073 / JCM 9320).